Here is a 502-residue protein sequence, read N- to C-terminus: Archaemetzincin-1 (502 aa).

Residue His262 coordinates Zn(2+). Glu263 (proton acceptor) is an active-site residue. The Zn(2+) site is built by His266, Cys273, Cys278, Cys297, and Cys300. Residues 336 to 383 (GEPSVSEDTLPFSADSGMGCESDTEPVTSPSEPVTPDGWSHPFPDGPE) form a disordered region.

The protein belongs to the peptidase M54 family. It depends on Zn(2+) as a cofactor.

Functionally, probable zinc metalloprotease. This is Archaemetzincin-1 (Amz1) from Mus musculus (Mouse).